We begin with the raw amino-acid sequence, 365 residues long: Peptide chain release factor 2 (365 aa).

The residue at position 251 (Q251) is an N5-methylglutamine.

Belongs to the prokaryotic/mitochondrial release factor family. Methylated by PrmC. Methylation increases the termination efficiency of RF2.

The protein localises to the cytoplasm. Its function is as follows. Peptide chain release factor 2 directs the termination of translation in response to the peptide chain termination codons UGA and UAA. This is Peptide chain release factor 2 from Campylobacter jejuni subsp. jejuni serotype O:23/36 (strain 81-176).